Here is a 656-residue protein sequence, read N- to C-terminus: Methylenetetrahydrofolate reductase (NADPH) (656 aa).

Polar residues predominate over residues 1-12 (MVNEARGNSSLN). The interval 1–44 (MVNEARGNSSLNPCLEGSASSGSESSKDSSRCSTPGLDPERHER) is disordered. Phosphoserine occurs at positions 9, 10, 18, 20, 21, 23, 25, 26, 29, and 30. T34 is modified (phosphothreonine). E63 acts as the Proton donor/acceptor in catalysis. Residue 63–68 (EFFPPR) coordinates NAD(+). Phosphotyrosine is present on Y90. T94 carries the post-translational modification Phosphothreonine. 94–95 (TW) contacts NAD(+). FAD is bound at residue 94–95 (TW). S103 carries the phosphoserine modification. FAD contacts are provided by residues H127, 157 to 159 (RGD), 174 to 175 (YA), Y197, 201 to 204 (HPEA), D210, and K217. D159 provides a ligand contact to substrate. Substrate-binding residues include Q228, Y321, and R325. S394 carries the post-translational modification Phosphoserine. T451 carries the post-translational modification Phosphothreonine. Residues N456, 461-464 (AAET), 481-485 (TINSQ), T560, and T573 each bind S-adenosyl-L-methionine.

It belongs to the methylenetetrahydrofolate reductase family. As to quaternary structure, homodimer. Requires FAD as cofactor. Phosphorylation of an N-terminal serine-rich phosphorylation region increases sensitivity to S-adenosylmethionine and inhibition.

It catalyses the reaction (6S)-5-methyl-5,6,7,8-tetrahydrofolate + NADP(+) = (6R)-5,10-methylene-5,6,7,8-tetrahydrofolate + NADPH + H(+). It functions in the pathway one-carbon metabolism; tetrahydrofolate interconversion. Allosterically regulated by S-adenosylmethionine (SAM). In terms of biological role, catalyzes the conversion of 5,10-methylenetetrahydrofolate to 5-methyltetrahydrofolate, a cosubstrate for homocysteine remethylation to methionine. Represents a key regulatory connection between the folate and methionine cycles. The polypeptide is Methylenetetrahydrofolate reductase (NADPH) (Homo sapiens (Human)).